Reading from the N-terminus, the 1076-residue chain is Carbamoyl phosphate synthase large chain (1076 aa).

Residues 1-403 form a carboxyphosphate synthetic domain region; it reads MPKRTDIQSI…SLQKALRGLE (403 aa). ATP is bound by residues Arg-129, Arg-169, Gly-175, Gly-176, Glu-208, Leu-210, Glu-215, Gly-241, Ile-242, His-243, Gln-285, and Glu-299. One can recognise an ATP-grasp 1 domain in the interval 133–328; it reads DKAMKSIGLE…IAKVAAKLAV (196 aa). Mg(2+)-binding residues include Gln-285, Glu-299, and Asn-301. Mn(2+) is bound by residues Gln-285, Glu-299, and Asn-301. Residues 404-553 are oligomerization domain; it reads VGAAGLDEKV…YSTYDEECEA (150 aa). The segment at 554–935 is carbamoyl phosphate synthetic domain; the sequence is NPTDKDKIMV…AYAKAELGCG (382 aa). An ATP-grasp 2 domain is found at 678-869; that stretch reads QQAVQRLGLK…LAKIAARVMV (192 aa). The ATP site is built by Arg-714, Arg-753, Leu-755, Glu-760, Gly-785, Val-786, His-787, Ser-788, Gln-828, and Glu-840. Residues Gln-828, Glu-840, and Asn-842 each coordinate Mg(2+). Residues Gln-828, Glu-840, and Asn-842 each contribute to the Mn(2+) site. The MGS-like domain maps to 936 to 1076; the sequence is SVYPEGGRAL…LHARVKANQA (141 aa). An allosteric domain region spans residues 936–1076; that stretch reads SVYPEGGRAL…LHARVKANQA (141 aa).

This sequence belongs to the CarB family. In terms of assembly, composed of two chains; the small (or glutamine) chain promotes the hydrolysis of glutamine to ammonia, which is used by the large (or ammonia) chain to synthesize carbamoyl phosphate. Tetramer of heterodimers (alpha,beta)4. The cofactor is Mg(2+). Requires Mn(2+) as cofactor.

The catalysed reaction is hydrogencarbonate + L-glutamine + 2 ATP + H2O = carbamoyl phosphate + L-glutamate + 2 ADP + phosphate + 2 H(+). The enzyme catalyses hydrogencarbonate + NH4(+) + 2 ATP = carbamoyl phosphate + 2 ADP + phosphate + 2 H(+). It functions in the pathway amino-acid biosynthesis; L-arginine biosynthesis; carbamoyl phosphate from bicarbonate: step 1/1. It participates in pyrimidine metabolism; UMP biosynthesis via de novo pathway; (S)-dihydroorotate from bicarbonate: step 1/3. Large subunit of the glutamine-dependent carbamoyl phosphate synthetase (CPSase). CPSase catalyzes the formation of carbamoyl phosphate from the ammonia moiety of glutamine, carbonate, and phosphate donated by ATP, constituting the first step of 2 biosynthetic pathways, one leading to arginine and/or urea and the other to pyrimidine nucleotides. The large subunit (synthetase) binds the substrates ammonia (free or transferred from glutamine from the small subunit), hydrogencarbonate and ATP and carries out an ATP-coupled ligase reaction, activating hydrogencarbonate by forming carboxy phosphate which reacts with ammonia to form carbamoyl phosphate. In Vibrio cholerae serotype O1 (strain ATCC 39315 / El Tor Inaba N16961), this protein is Carbamoyl phosphate synthase large chain.